Consider the following 92-residue polypeptide: LYR motif-containing protein 4A (92 aa).

It belongs to the complex I LYR family.

The protein is LYR motif-containing protein 4A (lyrm4a) of Salmo salar (Atlantic salmon).